The chain runs to 312 residues: Olfactory receptor 5J2 (312 aa).

At 1 to 25 (MADDNFTVVTEFILLGLTDHAELKA) the chain is on the extracellular side. N-linked (GlcNAc...) asparagine glycosylation occurs at asparagine 5. A helical transmembrane segment spans residues 26–46 (VLFVVFLVIYAITLLRNLGMI). Residues 47 to 54 (LLIQITSK) lie on the Cytoplasmic side of the membrane. Residues 55–75 (LHTPMYFLLSCLSFVDACYSS) form a helical membrane-spanning segment. Residues 76 to 99 (AIAPKMLVNLLVVKATISFSACMV) are Extracellular-facing. Cysteines 97 and 189 form a disulfide. A helical transmembrane segment spans residues 100-120 (QHLCFGVFITTEGFLLSVMAY). The Cytoplasmic portion of the chain corresponds to 121–139 (DRYVAIVSPLLYTVAMSDR). Residues 140-160 (KCVELVTGSWIGGIVNTLIHT) form a helical membrane-spanning segment. The Extracellular segment spans residues 161-196 (ISLRRLSFCRLNAVSHFFCDIPSLLKLSCSDTSMNE). The chain crosses the membrane as a helical span at residues 197 to 217 (LLLLTFSGVIAMATFLTVIIS). At 218–237 (YIFIAFASLRIHSASGRQQA) the chain is on the cytoplasmic side. The chain crosses the membrane as a helical span at residues 238-258 (FSTCASHLTAVTIFYGTLIFS). Residues 259–271 (YIQPSSQYFVEQE) are Extracellular-facing. A helical membrane pass occupies residues 272 to 292 (KVVSMFYTLGIPMLNLLIHSL). At 293–312 (RNKDVKEAVKRAIEMKHFLC) the chain is on the cytoplasmic side.

This sequence belongs to the G-protein coupled receptor 1 family.

It is found in the cell membrane. Odorant receptor. This chain is Olfactory receptor 5J2 (OR5J2), found in Homo sapiens (Human).